A 316-amino-acid polypeptide reads, in one-letter code: ATP synthase gamma chain (316 aa).

It belongs to the ATPase gamma chain family. As to quaternary structure, F-type ATPases have 2 components, CF(1) - the catalytic core - and CF(0) - the membrane proton channel. CF(1) has five subunits: alpha(3), beta(3), gamma(1), delta(1), epsilon(1). CF(0) has three main subunits: a, b and c.

The protein resides in the cellular thylakoid membrane. In terms of biological role, produces ATP from ADP in the presence of a proton gradient across the membrane. The gamma chain is believed to be important in regulating ATPase activity and the flow of protons through the CF(0) complex. The chain is ATP synthase gamma chain from Prochlorococcus marinus (strain MIT 9303).